A 492-amino-acid polypeptide reads, in one-letter code: Putative BTB/POZ domain and WD-repeat protein R786 (492 aa).

The region spanning 16–86 (TDVEIVLIDE…FYGQIVDSTN (71 aa)) is the BTB domain. WD repeat units lie at residues 241 to 281 (QSSC…IKIK) and 286 to 325 (LINRLIANHTIITDYNLFISIGYNESILVWDKNYTISKGI).

The protein belongs to the mimivirus BTB/WD family.

The polypeptide is Putative BTB/POZ domain and WD-repeat protein R786 (Acanthamoeba polyphaga (Amoeba)).